The chain runs to 268 residues: Ribosomal RNA small subunit methyltransferase A (268 aa).

Asn16, Leu18, Gly43, Glu64, Asp89, and Asn110 together coordinate S-adenosyl-L-methionine.

Belongs to the class I-like SAM-binding methyltransferase superfamily. rRNA adenine N(6)-methyltransferase family. RsmA subfamily.

It is found in the cytoplasm. The enzyme catalyses adenosine(1518)/adenosine(1519) in 16S rRNA + 4 S-adenosyl-L-methionine = N(6)-dimethyladenosine(1518)/N(6)-dimethyladenosine(1519) in 16S rRNA + 4 S-adenosyl-L-homocysteine + 4 H(+). Specifically dimethylates two adjacent adenosines (A1518 and A1519) in the loop of a conserved hairpin near the 3'-end of 16S rRNA in the 30S particle. May play a critical role in biogenesis of 30S subunits. This is Ribosomal RNA small subunit methyltransferase A from Pseudomonas aeruginosa (strain ATCC 15692 / DSM 22644 / CIP 104116 / JCM 14847 / LMG 12228 / 1C / PRS 101 / PAO1).